We begin with the raw amino-acid sequence, 381 residues long: Queuine tRNA-ribosyltransferase (381 aa).

Asp90 functions as the Proton acceptor in the catalytic mechanism. Residues 90-94 (DSGGF), Asp144, Gln193, and Gly221 each bind substrate. The tract at residues 252–258 (GVGTPEN) is RNA binding. Residue Asp271 is the Nucleophile of the active site. The interval 276-280 (TRNAR) is RNA binding; important for wobble base 34 recognition. Residues Cys309, Cys311, Cys314, and His340 each coordinate Zn(2+).

It belongs to the queuine tRNA-ribosyltransferase family. In terms of assembly, homodimer. Within each dimer, one monomer is responsible for RNA recognition and catalysis, while the other monomer binds to the replacement base PreQ1. Zn(2+) serves as cofactor.

The enzyme catalyses 7-aminomethyl-7-carbaguanine + guanosine(34) in tRNA = 7-aminomethyl-7-carbaguanosine(34) in tRNA + guanine. It participates in tRNA modification; tRNA-queuosine biosynthesis. Its function is as follows. Catalyzes the base-exchange of a guanine (G) residue with the queuine precursor 7-aminomethyl-7-deazaguanine (PreQ1) at position 34 (anticodon wobble position) in tRNAs with GU(N) anticodons (tRNA-Asp, -Asn, -His and -Tyr). Catalysis occurs through a double-displacement mechanism. The nucleophile active site attacks the C1' of nucleotide 34 to detach the guanine base from the RNA, forming a covalent enzyme-RNA intermediate. The proton acceptor active site deprotonates the incoming PreQ1, allowing a nucleophilic attack on the C1' of the ribose to form the product. After dissociation, two additional enzymatic reactions on the tRNA convert PreQ1 to queuine (Q), resulting in the hypermodified nucleoside queuosine (7-(((4,5-cis-dihydroxy-2-cyclopenten-1-yl)amino)methyl)-7-deazaguanosine). The sequence is that of Queuine tRNA-ribosyltransferase from Helicobacter hepaticus (strain ATCC 51449 / 3B1).